The primary structure comprises 256 residues: Thiazole synthase (256 aa).

Catalysis depends on lysine 96, which acts as the Schiff-base intermediate with DXP. 1-deoxy-D-xylulose 5-phosphate contacts are provided by residues glycine 157, 184–185, and 206–207; these read AG and NT.

This sequence belongs to the ThiG family. As to quaternary structure, homotetramer. Forms heterodimers with either ThiH or ThiS.

The protein localises to the cytoplasm. The enzyme catalyses [ThiS sulfur-carrier protein]-C-terminal-Gly-aminoethanethioate + 2-iminoacetate + 1-deoxy-D-xylulose 5-phosphate = [ThiS sulfur-carrier protein]-C-terminal Gly-Gly + 2-[(2R,5Z)-2-carboxy-4-methylthiazol-5(2H)-ylidene]ethyl phosphate + 2 H2O + H(+). The protein operates within cofactor biosynthesis; thiamine diphosphate biosynthesis. In terms of biological role, catalyzes the rearrangement of 1-deoxy-D-xylulose 5-phosphate (DXP) to produce the thiazole phosphate moiety of thiamine. Sulfur is provided by the thiocarboxylate moiety of the carrier protein ThiS. In vitro, sulfur can be provided by H(2)S. The protein is Thiazole synthase of Brucella anthropi (strain ATCC 49188 / DSM 6882 / CCUG 24695 / JCM 21032 / LMG 3331 / NBRC 15819 / NCTC 12168 / Alc 37) (Ochrobactrum anthropi).